The primary structure comprises 227 residues: 7-cyano-7-deazaguanine synthase (227 aa).

An ATP-binding site is contributed by 7-17 (VSGGMDSLVAT). Positions 187, 195, 198, and 201 each coordinate Zn(2+).

Belongs to the QueC family. Zn(2+) serves as cofactor.

The enzyme catalyses 7-carboxy-7-deazaguanine + NH4(+) + ATP = 7-cyano-7-deazaguanine + ADP + phosphate + H2O + H(+). Its pathway is purine metabolism; 7-cyano-7-deazaguanine biosynthesis. Functionally, catalyzes the ATP-dependent conversion of 7-carboxy-7-deazaguanine (CDG) to 7-cyano-7-deazaguanine (preQ(0)). The protein is 7-cyano-7-deazaguanine synthase of Chlorobaculum parvum (strain DSM 263 / NCIMB 8327) (Chlorobium vibrioforme subsp. thiosulfatophilum).